Here is a 133-residue protein sequence, read N- to C-terminus: Small ribosomal subunit protein uS8 (133 aa).

This sequence belongs to the universal ribosomal protein uS8 family. In terms of assembly, part of the 30S ribosomal subunit. Contacts proteins S5 and S12.

One of the primary rRNA binding proteins, it binds directly to 16S rRNA central domain where it helps coordinate assembly of the platform of the 30S subunit. In Chloroflexus aggregans (strain MD-66 / DSM 9485), this protein is Small ribosomal subunit protein uS8.